The following is a 298-amino-acid chain: Inosose dehydratase (298 aa).

The protein belongs to the IolE/MocC family. Glutathione serves as cofactor. Co(2+) is required as a cofactor. It depends on Mn(2+) as a cofactor.

It catalyses the reaction scyllo-inosose = 3D-3,5/4-trihydroxycyclohexane-1,2-dione + H2O. The protein operates within polyol metabolism; myo-inositol degradation into acetyl-CoA; acetyl-CoA from myo-inositol: step 2/7. In terms of biological role, catalyzes the dehydration of inosose (2-keto-myo-inositol, 2KMI or 2,4,6/3,5-pentahydroxycyclohexanone) to 3D-(3,5/4)-trihydroxycyclohexane-1,2-dione (D-2,3-diketo-4-deoxy-epi-inositol). The polypeptide is Inosose dehydratase (Lacticaseibacillus casei (Lactobacillus casei)).